Consider the following 1090-residue polypeptide: Solute carrier family 38 member 10 (1090 aa).

Transmembrane regions (helical) follow at residues 9–31 (WGLI…PFCF), 36–58 (IVLG…MFLV), 84–104 (LVET…YVVI), 123–143 (TVRV…LSLQ), 153–173 (FSAM…LSSL), 229–249 (IFAS…FFGY), 272–292 (MIRV…ILPC), 323–343 (VLTL…PNVE), 345–365 (ILGF…PALI), and 378–398 (VVLW…LSVT). Ser441 bears the Phosphoserine mark. 6 stretches are compositionally biased toward basic and acidic residues: residues 441-454 (SQEK…KEVL), 493-508 (EAHR…KVVV), 517-528 (PEEKKPPPRLPD), 544-560 (ESEK…EGKR), 587-596 (PRKEDSRPGN), and 607-623 (DSVE…REPA). Disordered stretches follow at residues 441 to 675 (SQEK…AGSK), 729 to 831 (EIRQ…IDLR), and 857 to 1037 (KAAP…ELAP). Residues Ser608 and Ser636 each carry the phosphoserine modification. Basic and acidic residues-rich tracts occupy residues 654 to 665 (EAAEQREKKEAE), 729 to 744 (EIRQ…KPKP), and 758 to 767 (GQEEEAEHAG). Residue Thr769 is modified to Phosphothreonine. At Ser887 the chain carries Phosphoserine. Residues 923-936 (RQSGPTKAPVQTQA) show a composition bias toward polar residues. 3 stretches are compositionally biased toward basic and acidic residues: residues 954–973 (PEVR…EQHK), 1004–1013 (ENAKPNRDLK), and 1026–1037 (DLASHPEQELAP).

This sequence belongs to the amino acid/polyamine transporter 2 family. Expressed in neurons, astrocytes and epithelial cells scattered throughout the central nervous system structures including striatum, ependyma, cerebral cortex, hippocampus, hypothalamus, thalamus, pons, and cerebellum (at protein level). Highly expressed in paraventricular hypothalamic nucleus, suprachiasmatic nucleus, anterior hypothalamic area central part, in lateral ventricule and in dorsal 3rd ventricule (at protein level). Expressed in choroid plexus epithelial cells (at protein level).

Its subcellular location is the membrane. It carries out the reaction L-glutamate(out) = L-glutamate(in). The enzyme catalyses L-glutamine(out) = L-glutamine(in). It catalyses the reaction L-alanine(in) = L-alanine(out). The catalysed reaction is L-serine(in) = L-serine(out). It carries out the reaction L-leucine(in) = L-leucine(out). Facilitates bidirectional transport of amino acids. May act as a glutamate sensor that regulates glutamate-glutamine cycle and mTOR signaling in the brain. The transport mechanism remains to be elucidated. The protein is Solute carrier family 38 member 10 of Mus musculus (Mouse).